We begin with the raw amino-acid sequence, 158 residues long: Succinate dehydrogenase [ubiquinone] cytochrome b small subunit, mitochondrial (158 aa).

The N-terminal 55 residues, 1-55 (MALWRLSVLCGAREGRALFLRTPVVRPALVSAFLQDRPAQGWCGTQHIHLSPSHH), are a transit peptide targeting the mitochondrion. The Mitochondrial matrix segment spans residues 56-62 (SGSKAAS). A helical transmembrane segment spans residues 63–84 (LHWTGERVVSVLLLGLIPAAYL). Over 85–89 (NPCSA) the chain is Mitochondrial intermembrane. A helical membrane pass occupies residues 90-110 (MDYSLAATLTLHSHWGIGQVV). Histidine 101 contacts heme b. The Mitochondrial matrix segment spans residues 111–119 (TDYVHGDAV). A ubiquinone is bound at residue tyrosine 113. A helical transmembrane segment spans residues 120–141 (QKAAKTGLLVLSAFTFAGLCYF). Residues 142–158 (NYHDVGICKAVAMLWKL) lie on the Mitochondrial intermembrane side of the membrane.

It belongs to the CybS family. As to quaternary structure, component of complex II composed of four subunits: the flavoprotein (FP) SDHA, iron-sulfur protein (IP) SDHB, and a cytochrome b560 composed of SDHC and SDHD.

The protein resides in the mitochondrion inner membrane. Its pathway is carbohydrate metabolism; tricarboxylic acid cycle. Membrane-anchoring subunit of succinate dehydrogenase (SDH) that is involved in complex II of the mitochondrial electron transport chain and is responsible for transferring electrons from succinate to ubiquinone (coenzyme Q). SDH also oxidizes malate to the non-canonical enol form of oxaloacetate, enol-oxaloacetate. Enol-oxaloacetate, which is a potent inhibitor of the succinate dehydrogenase activity, is further isomerized into keto-oxaloacetate. In Bos taurus (Bovine), this protein is Succinate dehydrogenase [ubiquinone] cytochrome b small subunit, mitochondrial (SDHD).